Reading from the N-terminus, the 100-residue chain is Large ribosomal subunit protein uL23 (100 aa).

This sequence belongs to the universal ribosomal protein uL23 family. As to quaternary structure, part of the 50S ribosomal subunit. Contacts protein L29, and trigger factor when it is bound to the ribosome.

Functionally, one of the early assembly proteins it binds 23S rRNA. One of the proteins that surrounds the polypeptide exit tunnel on the outside of the ribosome. Forms the main docking site for trigger factor binding to the ribosome. The protein is Large ribosomal subunit protein uL23 of Prochlorococcus marinus (strain MIT 9313).